We begin with the raw amino-acid sequence, 533 residues long: Flavin-containing monooxygenase 5 (533 aa).

Residue R5 is modified to Dimethylated arginine. FAD is bound by residues 10–14 (GAGAS), E33, and 41–42 (LW). A Phosphoserine modification is found at S54. Residue Y56 is modified to Phosphotyrosine. S58 is subject to Phosphoserine. An FAD-binding site is contributed by 62 to 63 (NT). 196–199 (SGGD) contacts NADP(+). S280 carries the post-translational modification Phosphoserine. T284 is modified (phosphothreonine). Phosphoserine is present on S401. The helical transmembrane segment at 513 to 533 (MMTMGKFMLAIAFLAIAVVYF) threads the bilayer.

This sequence belongs to the FMO family. FAD serves as cofactor. In terms of tissue distribution, kidney and liver.

Its subcellular location is the microsome membrane. It is found in the endoplasmic reticulum membrane. The catalysed reaction is N,N-dimethylaniline + NADPH + O2 + H(+) = N,N-dimethylaniline N-oxide + NADP(+) + H2O. The enzyme catalyses NADPH + O2 + H(+) = H2O2 + NADP(+). It catalyses the reaction heptan-2-one + NADPH + O2 + H(+) = pentyl acetate + NADP(+) + H2O. It carries out the reaction octan-3-one + NADPH + O2 + H(+) = pentyl propanoate + NADP(+) + H2O. The catalysed reaction is octan-3-one + NADPH + O2 + H(+) = ethyl hexanoate + NADP(+) + H2O. The enzyme catalyses hexan-3-one + NADPH + O2 + H(+) = ethyl butanoate + NADP(+) + H2O. It catalyses the reaction hexan-3-one + NADPH + O2 + H(+) = propyl propanoate + NADP(+) + H2O. It carries out the reaction heptan-4-one + NADPH + O2 + H(+) = propyl butanoate + NADP(+) + H2O. The catalysed reaction is (2E)-geranial + NADPH + O2 + H(+) = (1E)-2,6-dimethylhepta-1,5-dien-1-yl formate + NADP(+) + H2O. The enzyme catalyses sulcatone + NADPH + O2 + H(+) = 4-methylpent-3-en-1-yl acetate + NADP(+) + H2O. Acts as a Baeyer-Villiger monooxygenase on a broad range of substrates. Catalyzes the insertion of an oxygen atom into a carbon-carbon bond adjacent to a carbonyl, which converts ketones to esters. Active on diverse carbonyl compounds, whereas soft nucleophiles are mostly non- or poorly reactive. In contrast with other forms of FMO it is non- or poorly active on 'classical' substrates such as drugs, pesticides, and dietary components containing soft nucleophilic heteroatoms. Able to oxidize drug molecules bearing a carbonyl group on an aliphatic chain, such as nabumetone and pentoxifylline. Also, in the absence of substrates, shows slow but yet significant NADPH oxidase activity. Acts as a positive modulator of cholesterol biosynthesis as well as glucose homeostasis, promoting metabolic aging via pleiotropic effects. The chain is Flavin-containing monooxygenase 5 (FMO5) from Oryctolagus cuniculus (Rabbit).